We begin with the raw amino-acid sequence, 666 residues long: Chaperone protein dnaK1 (666 aa).

The residue at position 198 (threonine 198) is a Phosphothreonine; by autocatalysis.

It belongs to the heat shock protein 70 family.

Acts as a chaperone. The protein is Chaperone protein dnaK1 (dnaK1) of Prochlorococcus marinus (strain SARG / CCMP1375 / SS120).